The sequence spans 152 residues: Deoxyuridine 5'-triphosphate nucleotidohydrolase (152 aa).

Substrate is bound by residues 71 to 73 (RSG), N84, 88 to 90 (LID), and M98.

The protein belongs to the dUTPase family. Mg(2+) serves as cofactor.

It catalyses the reaction dUTP + H2O = dUMP + diphosphate + H(+). The protein operates within pyrimidine metabolism; dUMP biosynthesis; dUMP from dCTP (dUTP route): step 2/2. Its function is as follows. This enzyme is involved in nucleotide metabolism: it produces dUMP, the immediate precursor of thymidine nucleotides and it decreases the intracellular concentration of dUTP so that uracil cannot be incorporated into DNA. The chain is Deoxyuridine 5'-triphosphate nucleotidohydrolase from Hahella chejuensis (strain KCTC 2396).